Here is a 1051-residue protein sequence, read N- to C-terminus: Helicase POLQ-like (1051 aa).

Residues 1 to 10 (MANKHNLCKK) are compositionally biased toward basic residues. Disordered regions lie at residues 1–28 (MANK…AKRQ) and 61–112 (LFGT…APTD). Composition is skewed to polar residues over residues 64–78 (TQAT…QSGS) and 89–102 (SFPS…NSAS). The segment covering 103-112 (KPDEASAPTD) has biased composition (basic and acidic residues). One can recognise a Helicase ATP-binding domain in the interval 274–446 (LPAIRQRKNL…FLNADVYTRG (173 aa)). ATP is bound at residue 287–294 (LPTSGGKT). The short motif at 391–394 (DELH) is the DEAH box element. One can recognise a Helicase C-terminal domain in the interval 497–689 (HLAGLISECA…NEAVGLQSLI (193 aa)).

It belongs to the helicase family. SKI2 subfamily.

It is found in the nucleus. The protein resides in the chromosome. It catalyses the reaction Couples ATP hydrolysis with the unwinding of duplex DNA by translocating in the 3'-5' direction.. The enzyme catalyses ATP + H2O = ADP + phosphate + H(+). Its function is as follows. Single-stranded 3'-5' DNA helicase that plays a key role in homology-driven double-strand break (DSB) repair. Involved in different DSB repair mechanisms that are guided by annealing of extensive stretches of complementary bases at break ends, such as microhomology-mediated end-joining (MMEJ), single-strand annealing (SSA) or synthesis-dependent strand annealing (SDSA). This chain is Helicase POLQ-like, found in Drosophila melanogaster (Fruit fly).